The sequence spans 251 residues: Bidirectional sugar transporter SWEET4 (251 aa).

Residues 1–12 (MVNATVARNIAG) are Extracellular-facing. N-linked (GlcNAc...) asparagine glycosylation is present at Asn-3. The 85-residue stretch at 12–96 (GICGNVISLF…LAIFFFFSPT (85 aa)) folds into the MtN3/slv 1 domain. The helical transmembrane segment at 13-33 (ICGNVISLFLFLSPIPTFITI) threads the bilayer. At 34 to 45 (YKKKKVEEYKAD) the chain is on the cytoplasmic side. A helical membrane pass occupies residues 46 to 66 (PYLATVLNCALWVFYGLPMVQ). Residues 67–72 (PDSLLV) are Extracellular-facing. A helical transmembrane segment spans residues 73–93 (ITINGTGLAIELVYLAIFFFF). Residues 94–103 (SPTSRKVKVG) are Cytoplasmic-facing. Residues 104-124 (LWLIGEMVFVGIVATCTLLLF) traverse the membrane as a helical segment. Over 125-132 (HTHNQRSS) the chain is Extracellular. Residues 133–153 (FVGIFCVIFVSLMYIAPLTIM) form a helical membrane-spanning segment. In terms of domain architecture, MtN3/slv 2 spans 133-216 (FVGIFCVIFV…LILYACYYKT (84 aa)). The Cytoplasmic portion of the chain corresponds to 154 to 163 (SKVIKTKSVK). A helical membrane pass occupies residues 164–186 (YMPFSLSLANFLNGVVWVIYALI). The Extracellular segment spans residues 187–190 (KFDL). Residues 191–213 (FILIGNGLGTVSGAVQLILYACY) form a helical membrane-spanning segment. Over 214–251 (YKTTPKDDEDEEDEENLSKVNSQLQLSGNSGQAKRVSA) the chain is Cytoplasmic. The segment at 220 to 251 (DDEDEEDEENLSKVNSQLQLSGNSGQAKRVSA) is disordered. The segment covering 231-245 (SKVNSQLQLSGNSGQ) has biased composition (polar residues).

This sequence belongs to the SWEET sugar transporter family. As to quaternary structure, forms homooligomers and heterooligomers with SWEET8 and SWEET17.

Its subcellular location is the cell membrane. Mediates both low-affinity uptake and efflux of sugar across the plasma membrane. The polypeptide is Bidirectional sugar transporter SWEET4 (Arabidopsis thaliana (Mouse-ear cress)).